Reading from the N-terminus, the 502-residue chain is Intracellular exo-alpha-(1-&gt;5)-L-arabinofuranosidase (502 aa).

Positions 29, 74, and 174 each coordinate alpha-L-arabinofuranose. Residue E175 is the Proton donor/acceptor of the active site. Residues Y246, E294, and Q351 each coordinate alpha-L-arabinofuranose. E294 acts as the Nucleophile in catalysis.

Belongs to the glycosyl hydrolase 51 family. Homohexamer; trimer of dimers.

It is found in the cytoplasm. The catalysed reaction is Hydrolysis of terminal non-reducing alpha-L-arabinofuranoside residues in alpha-L-arabinosides.. The protein operates within glycan metabolism; L-arabinan degradation. Its activity is regulated as follows. Strongly inhibited by Hg(2+). Involved in the degradation of arabinan and is a key enzyme in the complete degradation of the plant cell wall. Catalyzes the cleavage of terminal alpha-(1-&gt;5)-arabinofuranosyl bonds in different hemicellulosic homopolysaccharides (branched and debranched arabinans). It acts preferentially on aryl-alpha-L-arabinofuranosides, and is much less effective on aryl-beta-D-xylopyranosides. The sequence is that of Intracellular exo-alpha-(1-&gt;5)-L-arabinofuranosidase (abfA) from Geobacillus stearothermophilus (Bacillus stearothermophilus).